A 382-amino-acid polypeptide reads, in one-letter code: Protein farnesyltransferase subunit beta (382 aa).

PFTB repeat units lie at residues Cys-78–Asp-119, Arg-129–Gly-170, Phe-178–Gly-219, Glu-226–Ala-268, and Pro-286–Ala-328. Residues His-204–Tyr-207 and Arg-247–Lys-250 each bind (2E,6E)-farnesyl diphosphate. Residues Asp-253 and Cys-255 each coordinate Zn(2+). Tyr-256–Trp-259 lines the (2E,6E)-farnesyl diphosphate pocket. His-316 is a Zn(2+) binding site.

It belongs to the protein prenyltransferase subunit beta family. Heterodimer of an alpha(cwp1) and a beta(cpp1) subunit. The cofactor is Zn(2+).

It carries out the reaction L-cysteinyl-[protein] + (2E,6E)-farnesyl diphosphate = S-(2E,6E)-farnesyl-L-cysteinyl-[protein] + diphosphate. Its function is as follows. Catalyzes the transfer of a farnesyl moiety from farnesyl diphosphate to a cysteine at the fourth position from the C-terminus of several proteins. The beta(cpp1) subunit is responsible for peptide-binding. This is Protein farnesyltransferase subunit beta (cpp1) from Schizosaccharomyces pombe (strain 972 / ATCC 24843) (Fission yeast).